The sequence spans 553 residues: Zinc finger protein 324A (553 aa).

One can recognise a KRAB domain in the interval 1 to 72 (MAFEDVAVYF…SGTDTTLSRT (72 aa)). Positions 130–135 (PSRERK) match the Nuclear localization signal motif. Residues 186-221 (GRQPRTPERQKPCAQEVPGRTFGSAQDLEAAGGRGH) are disordered. 9 consecutive C2H2-type zinc fingers follow at residues 257–279 (FECRACSKVFVKSSDLLKHLRTH), 285–307 (YECAQCGKAFSQTSHLTQHQRIH), 313–335 (YACPVCGKAFRHSSSLVRHQRIH), 341–363 (FRCSECGKAFSHGSNLSQHRKIH), 369–391 (YACAQCGRRFCRNSHLIQHERTH), 397–419 (FVCALCGAAFSQGSSLFKHQRVH), 425–447 (FACPQCGRAFSHSSNLTQHQLLH), 453–475 (FRCVDCGKAFAKGAVLLSHRRIH), and 481–503 (FVCTQCGRAFRERPALFHHQRIH). The segment at 502–553 (IHTGEKTVRRSRASLHPQARSVAGASSEGAPAKETEPTPASGPAAVSQPAEV) is disordered.

Belongs to the krueppel C2H2-type zinc-finger protein family. In terms of tissue distribution, expressed at high levels in the spleen, thymus, and PBMC, at low levels in the prostate, ovary, small intestine, colon (mucosal lining), placenta, lung, and pancreas, and very weakly expressed in the liver and kidney.

It localises to the nucleus. In terms of biological role, may be involved in transcriptional regulation. May be involved in regulation of cell proliferation. The sequence is that of Zinc finger protein 324A (ZNF324) from Homo sapiens (Human).